Reading from the N-terminus, the 84-residue chain is uncharacterized protein (84 aa).

Positions 2 to 84 (ARVTLRITGT…RAKGDIEIEM (83 aa)) constitute a 2Fe-2S ferredoxin-type domain. Positions 37, 42, 45, and 74 each coordinate [2Fe-2S] cluster.

It depends on [2Fe-2S] cluster as a cofactor.

This is an uncharacterized protein from Escherichia coli O6:H1 (strain CFT073 / ATCC 700928 / UPEC).